Reading from the N-terminus, the 389-residue chain is uncharacterized protein (389 aa).

Disordered stretches follow at residues 119 to 156 (SSLF…GENQ), 180 to 233 (PTSK…SSMG), 294 to 321 (SIPS…TSRT), and 362 to 389 (PEDM…EIKV). Residues 137-155 (SPSTINIEKNRHSSNSGEN) are compositionally biased toward polar residues. Residues 190–204 (DDGDEEDDTDDEGEA) are compositionally biased toward acidic residues.

This is an uncharacterized protein from Caenorhabditis elegans.